The following is a 943-amino-acid chain: 2-oxoglutarate dehydrogenase E1 component (943 aa).

The protein belongs to the alpha-ketoglutarate dehydrogenase family. Homodimer. Part of the 2-oxoglutarate dehydrogenase (OGDH) complex composed of E1 (2-oxoglutarate dehydrogenase), E2 (dihydrolipoamide succinyltransferase) and E3 (dihydrolipoamide dehydrogenase); the complex contains multiple copies of the three enzymatic components (E1, E2 and E3). Thiamine diphosphate is required as a cofactor.

The catalysed reaction is N(6)-[(R)-lipoyl]-L-lysyl-[protein] + 2-oxoglutarate + H(+) = N(6)-[(R)-S(8)-succinyldihydrolipoyl]-L-lysyl-[protein] + CO2. In terms of biological role, E1 component of the 2-oxoglutarate dehydrogenase (OGDH) complex which catalyzes the decarboxylation of 2-oxoglutarate, the first step in the conversion of 2-oxoglutarate to succinyl-CoA and CO(2). This chain is 2-oxoglutarate dehydrogenase E1 component (sucA), found in Azotobacter vinelandii.